A 219-amino-acid chain; its full sequence is 2-hydroxy-3-keto-5-methylthiopentenyl-1-phosphate phosphatase (219 aa).

Belongs to the HAD-like hydrolase superfamily. MtnX family.

It carries out the reaction 2-hydroxy-5-methylsulfanyl-3-oxopent-1-enyl phosphate + H2O = 1,2-dihydroxy-5-(methylsulfanyl)pent-1-en-3-one + phosphate. It participates in amino-acid biosynthesis; L-methionine biosynthesis via salvage pathway; L-methionine from S-methyl-5-thio-alpha-D-ribose 1-phosphate: step 4/6. In terms of biological role, dephosphorylates 2-hydroxy-3-keto-5-methylthiopentenyl-1-phosphate (HK-MTPenyl-1-P) yielding 1,2-dihydroxy-3-keto-5-methylthiopentene (DHK-MTPene). In Bacillus cereus (strain ATCC 14579 / DSM 31 / CCUG 7414 / JCM 2152 / NBRC 15305 / NCIMB 9373 / NCTC 2599 / NRRL B-3711), this protein is 2-hydroxy-3-keto-5-methylthiopentenyl-1-phosphate phosphatase.